Reading from the N-terminus, the 197-residue chain is Imidazoleglycerol-phosphate dehydratase (197 aa).

It belongs to the imidazoleglycerol-phosphate dehydratase family.

It is found in the cytoplasm. It carries out the reaction D-erythro-1-(imidazol-4-yl)glycerol 3-phosphate = 3-(imidazol-4-yl)-2-oxopropyl phosphate + H2O. Its pathway is amino-acid biosynthesis; L-histidine biosynthesis; L-histidine from 5-phospho-alpha-D-ribose 1-diphosphate: step 6/9. This Alkalilimnicola ehrlichii (strain ATCC BAA-1101 / DSM 17681 / MLHE-1) protein is Imidazoleglycerol-phosphate dehydratase.